Here is a 43-residue protein sequence, read N- to C-terminus: Protein PsbN (43 aa).

A helical membrane pass occupies residues 7–27; it reads VAIFISCLLVSFTGYALYTAF.

It belongs to the PsbN family.

Its subcellular location is the plastid. It localises to the chloroplast thylakoid membrane. Its function is as follows. May play a role in photosystem I and II biogenesis. The polypeptide is Protein PsbN (Huperzia lucidula (Shining clubmoss)).